The primary structure comprises 144 residues: Large ribosomal subunit protein uL15 (144 aa).

The segment at Met-1–Glu-51 is disordered. Gly residues predominate over residues Arg-21–Gly-31. The span at Gly-32–Arg-47 shows a compositional bias: basic residues.

Belongs to the universal ribosomal protein uL15 family. In terms of assembly, part of the 50S ribosomal subunit.

Its function is as follows. Binds to the 23S rRNA. In Actinobacillus succinogenes (strain ATCC 55618 / DSM 22257 / CCUG 43843 / 130Z), this protein is Large ribosomal subunit protein uL15.